The primary structure comprises 467 residues: Proton extrusion protein PxcA (467 aa).

Residues 183-205 are disordered; that stretch reads TSPPQLIRPRTEQNKKPRGKADT. Positions 191–203 are enriched in basic and acidic residues; sequence PRTEQNKKPRGKA. The next 4 helical transmembrane spans lie at 249–269, 352–372, 391–411, and 427–447; these read FILLLIIVPLLTHQLSKALIV, IFSVGAFIWLLLVSKPSIMVL, IIILFTDVFVGFHSPHGWEVI, and FIFLFIATFPVILDTIFKYWI.

This sequence belongs to the CemA family.

It is found in the cell inner membrane. Its function is as follows. Required for H(+) efflux immediately after light irradiation to form a rapid H(+) concentration gradient across the thylakoid membranes. Together with PxcL, contributes to transient H(+) uptake following dark to light transition. In Trichormus variabilis (strain ATCC 29413 / PCC 7937) (Anabaena variabilis), this protein is Proton extrusion protein PxcA.